Reading from the N-terminus, the 114-residue chain is Large ribosomal subunit protein uL22c (114 aa).

This sequence belongs to the universal ribosomal protein uL22 family. In terms of assembly, part of the 50S ribosomal subunit.

The protein localises to the plastid. The protein resides in the chloroplast. This protein binds specifically to 23S rRNA. In terms of biological role, the globular domain of the protein is located near the polypeptide exit tunnel on the outside of the subunit, while an extended beta-hairpin is found that lines the wall of the exit tunnel in the center of the 70S ribosome. The polypeptide is Large ribosomal subunit protein uL22c (rpl22) (Gracilaria tenuistipitata (Red alga)).